A 215-amino-acid polypeptide reads, in one-letter code: MDFYYSPRSSGSRTIIMVAKALGLELNKKQLRITEGEHLKPEFLKLNPQHTIPTLVDNGFAIWESRAIAVYLVEKYGKDDSLFPNDPQKRALINQRLYFDMGTLHDSFMKYYYPFIRTGQLGNAENYKKVEAAFEFLDIFLEGQDYVAGSQLTVADIAILSSVSTFEVVEFDISKYPNVARWYANAKKITPGWDENWKGLLQMKTMYEAQKASLK.

One can recognise a GST N-terminal domain in the interval 1–80 (MDFYYSPRSS…YLVEKYGKDD (80 aa)). Glutathione-binding positions include Ser9, 50 to 52 (HTI), and 64 to 66 (ESR). In terms of domain architecture, GST C-terminal spans 86-207 (DPQKRALINQ…KGLLQMKTMY (122 aa)).

The protein belongs to the GST superfamily. Delta family. In terms of assembly, homodimer.

The enzyme catalyses RX + glutathione = an S-substituted glutathione + a halide anion + H(+). Its function is as follows. Conjugation of reduced glutathione to a wide number of exogenous and endogenous hydrophobic electrophiles. May be involved in detoxification. The sequence is that of Glutathione S-transferase D4 from Drosophila melanogaster (Fruit fly).